Consider the following 210-residue polypeptide: uncharacterized protein (210 aa).

This is an uncharacterized protein from Mycobacterium bovis (strain ATCC BAA-935 / AF2122/97).